The sequence spans 209 residues: Ribonuclease HII (209 aa).

The region spanning 18 to 209 (GLVAGVDEVG…FKPVKALLER (192 aa)) is the RNase H type-2 domain. Residues Asp-24, Glu-25, and Asp-116 each coordinate a divalent metal cation.

It belongs to the RNase HII family. Requires Mn(2+) as cofactor. The cofactor is Mg(2+).

The protein localises to the cytoplasm. It catalyses the reaction Endonucleolytic cleavage to 5'-phosphomonoester.. Functionally, endonuclease that specifically degrades the RNA of RNA-DNA hybrids. This is Ribonuclease HII from Shewanella sp. (strain MR-7).